A 357-amino-acid polypeptide reads, in one-letter code: Phosphoribosylformylglycinamidine cyclo-ligase (357 aa).

This sequence belongs to the AIR synthase family.

The protein localises to the cytoplasm. The enzyme catalyses 2-formamido-N(1)-(5-O-phospho-beta-D-ribosyl)acetamidine + ATP = 5-amino-1-(5-phospho-beta-D-ribosyl)imidazole + ADP + phosphate + H(+). It functions in the pathway purine metabolism; IMP biosynthesis via de novo pathway; 5-amino-1-(5-phospho-D-ribosyl)imidazole from N(2)-formyl-N(1)-(5-phospho-D-ribosyl)glycinamide: step 2/2. This chain is Phosphoribosylformylglycinamidine cyclo-ligase, found in Rhizobium rhizogenes (strain K84 / ATCC BAA-868) (Agrobacterium radiobacter).